Here is a 207-residue protein sequence, read N- to C-terminus: Small ribosomal subunit protein uS4 (207 aa).

The interval 31–53 (KAKFDSKPGQHGRTSGARTSDFG) is disordered. The S4 RNA-binding domain occupies 97–160 (SRLDNVVYRM…KKQNRIVEAL (64 aa)).

It belongs to the universal ribosomal protein uS4 family. Part of the 30S ribosomal subunit. Contacts protein S5. The interaction surface between S4 and S5 is involved in control of translational fidelity.

In terms of biological role, one of the primary rRNA binding proteins, it binds directly to 16S rRNA where it nucleates assembly of the body of the 30S subunit. Functionally, with S5 and S12 plays an important role in translational accuracy. The sequence is that of Small ribosomal subunit protein uS4 from Albidiferax ferrireducens (strain ATCC BAA-621 / DSM 15236 / T118) (Rhodoferax ferrireducens).